We begin with the raw amino-acid sequence, 159 residues long: Ribosomal RNA large subunit methyltransferase H (159 aa).

S-adenosyl-L-methionine-binding positions include leucine 76, glycine 108, and 127 to 132 (FSKMTF).

Belongs to the RNA methyltransferase RlmH family. In terms of assembly, homodimer.

The protein localises to the cytoplasm. The enzyme catalyses pseudouridine(1915) in 23S rRNA + S-adenosyl-L-methionine = N(3)-methylpseudouridine(1915) in 23S rRNA + S-adenosyl-L-homocysteine + H(+). In terms of biological role, specifically methylates the pseudouridine at position 1915 (m3Psi1915) in 23S rRNA. The chain is Ribosomal RNA large subunit methyltransferase H from Geobacillus sp. (strain WCH70).